The sequence spans 359 residues: MPGHLLQEEMTPSYTTTTTITAPPSGSLQNGREKVKTVPLYLEEDIRPEMKEDIYDPTYQDEEGPPPKLEYVWRNIILMALLHVGALYGITLVPSCKLYTCLFAFVYYVISIEGIGAGVHRLWSHRTYKARLPLRIFLIIANTMAFQNDVYEWARDHRAHHKFSETHADPHNSRRGFFFSHVGWLLVRKHPAVKEKGGKLDMSDLKAEKLVMFQRRYYKPGILLMCFILPTLVPWYCWGETFLNSFYVATLLRYAVVLNATWLVNSAAHLYGYRPYDKNIDPRQNALVSLGSMGEGFHNYHHAFPYDYSASEYRWHINFTTFFIDCMAALGLAYDRKRVSKATVLARIKRTGDGSHKSG.

Residues 1–34 (MPGHLLQEEMTPSYTTTTTITAPPSGSLQNGREK) are disordered. Residues 1 to 72 (MPGHLLQEEM…EGPPPKLEYV (72 aa)) are Cytoplasmic-facing. Low complexity predominate over residues 11–27 (TPSYTTTTTITAPPSGS). Residues 73–93 (WRNIILMALLHVGALYGITLV) form a helical membrane-spanning segment. A substrate-binding site is contributed by asparagine 75. Topologically, residues 94–97 (PSCK) are lumenal. The helical transmembrane segment at 98–118 (LYTCLFAFVYYVISIEGIGAG) threads the bilayer. The Cytoplasmic portion of the chain corresponds to 119 to 217 (VHRLWSHRTY…EKLVMFQRRY (99 aa)). The Fe cation site is built by histidine 120 and histidine 125. The Histidine box-1 signature appears at 120–125 (HRLWSH). Positions 148, 155, and 156 each coordinate substrate. Residues histidine 157, histidine 160, and histidine 161 each contribute to the Fe cation site. Positions 157 to 161 (HRAHH) match the Histidine box-2 motif. Substrate-binding residues include arginine 188 and lysine 189. A Phosphoserine modification is found at serine 203. Residues 218 to 237 (YKPGILLMCFILPTLVPWYC) traverse the membrane as a helical segment. Residues 238-241 (WGET) are Lumenal-facing. Residues 242 to 263 (FLNSFYVATLLRYAVVLNATWL) traverse the membrane as a helical segment. Tryptophan 262 lines the substrate pocket. Topologically, residues 264–359 (VNSAAHLYGY…RTGDGSHKSG (96 aa)) are cytoplasmic. The Fe cation site is built by histidine 269, histidine 298, histidine 301, and histidine 302. The short motif at 298–302 (HNYHH) is the Histidine box-3 element.

Belongs to the fatty acid desaturase type 1 family. Requires Fe(2+) as cofactor. In terms of tissue distribution, detected in skin, but at lower levels compared to Scd1. Detected in the middlle part of the sebaceous gland, but not in hair follicle. Not detected in liver and brain.

Its subcellular location is the endoplasmic reticulum membrane. The protein resides in the microsome membrane. The enzyme catalyses hexadecanoyl-CoA + 2 Fe(II)-[cytochrome b5] + O2 + 2 H(+) = (9Z)-hexadecenoyl-CoA + 2 Fe(III)-[cytochrome b5] + 2 H2O. Functionally, stearoyl-CoA desaturase that utilizes O(2) and electrons from reduced cytochrome b5 to introduce the first double bond into saturated fatty acyl-CoA substrates. Catalyzes the insertion of a cis double bond at the delta-9 position into fatty acyl-CoA substrates including palmitoyl-CoA. Has a strong preference for saturated fatty acids with chain lengths of 14 or 16 carbon atoms (C14:0 and C16:0), and has only very low activity with stearatate (C18:0). Required for the biosynthesis of membrane phospholipids, cholesterol esters and triglycerides. This Mus musculus (Mouse) protein is Acyl-CoA desaturase 3.